The sequence spans 141 residues: Large ribosomal subunit protein uL16 (141 aa).

This sequence belongs to the universal ribosomal protein uL16 family. As to quaternary structure, part of the 50S ribosomal subunit.

Binds 23S rRNA and is also seen to make contacts with the A and possibly P site tRNAs. In Rhodospirillum centenum (strain ATCC 51521 / SW), this protein is Large ribosomal subunit protein uL16.